A 1403-amino-acid chain; its full sequence is Protein FAM135B (1403 aa).

Disordered stretches follow at residues 445–483 (EKNL…EVQE), 514–548 (EDEC…GQTP), 648–669 (REAL…DLSA), and 718–740 (RHAH…LPSG). Residues 649–661 (EALDTKPSQPDHA) show a composition bias toward basic and acidic residues. Residues 731–740 (TESNTSLPSG) show a composition bias toward polar residues. Ser775 and Ser776 each carry phosphoserine. The disordered stretch occupies residues 790-819 (TAGFSEDLDPSSKENSPPRHTSLSYGGSRV). Positions 802 to 814 (KENSPPRHTSLSY) are enriched in polar residues.

Belongs to the FAM135 family.

This Mus musculus (Mouse) protein is Protein FAM135B (Fam135b).